A 238-amino-acid chain; its full sequence is 2-C-methyl-D-erythritol 4-phosphate cytidylyltransferase (238 aa).

It belongs to the IspD/TarI cytidylyltransferase family. IspD subfamily.

The enzyme catalyses 2-C-methyl-D-erythritol 4-phosphate + CTP + H(+) = 4-CDP-2-C-methyl-D-erythritol + diphosphate. It participates in isoprenoid biosynthesis; isopentenyl diphosphate biosynthesis via DXP pathway; isopentenyl diphosphate from 1-deoxy-D-xylulose 5-phosphate: step 2/6. Functionally, catalyzes the formation of 4-diphosphocytidyl-2-C-methyl-D-erythritol from CTP and 2-C-methyl-D-erythritol 4-phosphate (MEP). In Acinetobacter baumannii (strain SDF), this protein is 2-C-methyl-D-erythritol 4-phosphate cytidylyltransferase.